We begin with the raw amino-acid sequence, 359 residues long: Diacyltrehalose acyltransferase Chp2 (359 aa).

A helical membrane pass occupies residues 4-24; it reads VIAGAFAVWLVGWAGGFGTAI. The region spanning 79–316 is the PE-PPE domain; the sequence is PNAKHDLIDY…VLQPQIDAAY (238 aa).

It belongs to the mycobacterial PPE family.

It is found in the cell inner membrane. With respect to regulation, activity is probably potentiated by the DAT/PAT transporter MmpL10. Inhibited by the lipase inhibitor tetrahydrolipstatin (THL). In terms of biological role, involved in the final steps of polyacyltrehalose (PAT) biosynthesis. Catalyzes the transfer of three mycolipenoyl groups onto diacyltrehalose (DAT) to form PAT. In Mycobacterium tuberculosis (strain ATCC 25618 / H37Rv), this protein is Diacyltrehalose acyltransferase Chp2.